A 350-amino-acid polypeptide reads, in one-letter code: Protein-glutamate methylesterase/protein-glutamine glutaminase (350 aa).

Positions 5 to 122 (TVLCVDDSAL…REGMLAYSEL (118 aa)) constitute a Response regulatory domain. Asp-56 is subject to 4-aspartylphosphate. One can recognise a CheB-type methylesterase domain in the interval 153-345 (LLSSEKLIAV…KRMLAKISSG (193 aa)). Catalysis depends on residues Ser-165, His-191, and Asp-287.

The protein belongs to the CheB family. In terms of processing, phosphorylated by CheA. Phosphorylation of the N-terminal regulatory domain activates the methylesterase activity.

Its subcellular location is the cytoplasm. The enzyme catalyses [protein]-L-glutamate 5-O-methyl ester + H2O = L-glutamyl-[protein] + methanol + H(+). It carries out the reaction L-glutaminyl-[protein] + H2O = L-glutamyl-[protein] + NH4(+). Involved in chemotaxis. Part of a chemotaxis signal transduction system that modulates chemotaxis in response to various stimuli. Catalyzes the demethylation of specific methylglutamate residues introduced into the chemoreceptors (methyl-accepting chemotaxis proteins or MCP) by CheR. Also mediates the irreversible deamidation of specific glutamine residues to glutamic acid. The sequence is that of Protein-glutamate methylesterase/protein-glutamine glutaminase from Photorhabdus laumondii subsp. laumondii (strain DSM 15139 / CIP 105565 / TT01) (Photorhabdus luminescens subsp. laumondii).